The following is a 416-amino-acid chain: CinA-like protein (416 aa).

Belongs to the CinA family.

This is CinA-like protein from Thermosynechococcus vestitus (strain NIES-2133 / IAM M-273 / BP-1).